We begin with the raw amino-acid sequence, 352 residues long: MKKKREKLVLKSEIIAQMPKVELHCHLDGSLSLSVIKELAKNAGIHMTMSDEEILEKAQAPENTKNLLEYLQRFDFVLPLLQTYKNLELAAYDVVRQAANDNIKYIEIRFAPSQHLLENLTLEEAVEAVIAGLSRAENDFDIRANALVCGLKQEPIQKLQKLLPLFDKIPDEHLVGFDMAGDELNYPQEKFVDLIHDIKIKGVNVTLHAGECPACEKNILDSIAMGASRIGHGIMTKNLSEAEQKMMIEKQIVLEMAPTSNFQTKAVTELAQYPFKELYDKGIHVTLNTDNRMVSATNLSKEYEKISAWYPDFSLSDFEKINHYAIDGAFIGQEEKEELHQRFTKEYKKISE.

Residues histidine 24 and histidine 26 each coordinate Zn(2+). Substrate-binding residues include histidine 26, aspartate 28, and glycine 181. Histidine 208 contacts Zn(2+). The active-site Proton donor is the glutamate 211. Aspartate 290 serves as a coordination point for Zn(2+).

This sequence belongs to the metallo-dependent hydrolases superfamily. Adenosine and AMP deaminases family. Adenosine deaminase subfamily. It depends on Zn(2+) as a cofactor.

The catalysed reaction is adenosine + H2O + H(+) = inosine + NH4(+). The enzyme catalyses 2'-deoxyadenosine + H2O + H(+) = 2'-deoxyinosine + NH4(+). Catalyzes the hydrolytic deamination of adenosine and 2-deoxyadenosine. The chain is Adenosine deaminase from Lactococcus lactis subsp. lactis (strain IL1403) (Streptococcus lactis).